A 428-amino-acid polypeptide reads, in one-letter code: Neuromedin-U receptor 1 (428 aa).

Topologically, residues 1-59 (MTPPCLNCSIFPGALSPNASRSPLVCNISEFKWPYQPEDLNLTDEALRLKYLGPQQMKQ) are extracellular. N-linked (GlcNAc...) asparagine glycans are attached at residues Asn27 and Asn41. The chain crosses the membrane as a helical span at residues 60–80 (FVPICVTYLLIFVVGTLGNGL). Residues 81 to 96 (TCTVILRNKTMRTPTN) are Cytoplasmic-facing. Residues 97-117 (FYLFSLAVSDMLVLLVGLPLE) traverse the membrane as a helical segment. Over 118–137 (LYEMQQNYPFQLGASACYFR) the chain is Extracellular. Cys134 and Cys219 are oxidised to a cystine. Residues 138-158 (ILLLETVCLASVLNVTALSVE) form a helical membrane-spanning segment. Residues 159–181 (RYVAVVRPLQAKSVMTRAHVRRM) are Cytoplasmic-facing. Residues 182-202 (VGAIWVLATLFSLPNTSLHGL) traverse the membrane as a helical segment. The Extracellular portion of the chain corresponds to 203–235 (SQLTVPCRGPVPDSAICSLVGPMDFYKLVVLTT). A helical transmembrane segment spans residues 236-256 (ALLFFCLPMVTISVLYLLIGL). Residues 257-294 (RLRRERMLLQVEVKGRKTAATQETSHRRIQLQDRGRRQ) lie on the Cytoplasmic side of the membrane. Residues 295 to 315 (VTKMLFALVVVFGICWAPFHA) traverse the membrane as a helical segment. The Extracellular portion of the chain corresponds to 316–339 (DRIMWSLVYGHSTEGLHLAYQCVH). The chain crosses the membrane as a helical span at residues 340–360 (IASGIFFYLGSAANPVLYSLM). The Cytoplasmic segment spans residues 361–428 (STRFRETFLQ…PGCQQETDPS (68 aa)).

The protein belongs to the G-protein coupled receptor 1 family. Ubiquitously expressed.

Its subcellular location is the cell membrane. Receptor for the neuromedin-U and neuromedin-S neuropeptides. The protein is Neuromedin-U receptor 1 (Nmur1) of Mus musculus (Mouse).